A 492-amino-acid chain; its full sequence is Ribose import ATP-binding protein RbsA (492 aa).

2 ABC transporter domains span residues 3–239 (IDMR…VGRK) and 238–492 (RKLE…TGGK). 35-42 (GENGAGKS) is an ATP binding site.

Belongs to the ABC transporter superfamily. Ribose importer (TC 3.A.1.2.1) family. The complex is composed of an ATP-binding protein (RbsA), two transmembrane proteins (RbsC) and a solute-binding protein (RbsB).

The protein resides in the cell membrane. The enzyme catalyses D-ribose(out) + ATP + H2O = D-ribose(in) + ADP + phosphate + H(+). Functionally, part of the ABC transporter complex RbsABC involved in ribose import. Responsible for energy coupling to the transport system. The protein is Ribose import ATP-binding protein RbsA of Streptococcus agalactiae serotype Ia (strain ATCC 27591 / A909 / CDC SS700).